An 834-amino-acid polypeptide reads, in one-letter code: ABC transporter A family member 11 (834 aa).

7 consecutive transmembrane segments (helical) span residues 35–55 (FFILGILLPMISIGASIILNN), 188–208 (MPMILQYGFVFFIPYFAILIV), 235–255 (VFDYLIFLIPTIIGWILLYSF), 269–289 (FLLFLTFGISAIPFGFVLQFI), 297–319 (NKWLYPFTSIVTSIPSALISVAF), 324–346 (PLIVELLLSILPTFSFCNGLKAL), and 355–375 (SYTILIQLLSGLIYLILIYFI). An ABC transporter domain is found at 452-693 (LDKPSIIERC…YGSGYTIDII (242 aa)). 495–502 (GPNGSGKS) contacts ATP. A compositionally biased stretch (polar residues) spans 779-789 (KQQTNNKSNII). Positions 779–834 (KQQTNNKSNIINNNNNNNNNNNNNNNNNNNNNNNNNNNNNNNNNTNNNTNNNQLIN) are disordered. The segment covering 790–834 (NNNNNNNNNNNNNNNNNNNNNNNNNNNNNNNNNTNNNTNNNQLIN) has biased composition (low complexity).

The protein belongs to the ABC transporter superfamily. ABCA family.

The protein resides in the membrane. The polypeptide is ABC transporter A family member 11 (abcA11) (Dictyostelium discoideum (Social amoeba)).